A 373-amino-acid chain; its full sequence is MRKELLKKVKRVVVKIGSGVLTGENGGVDPGFLDGLAAQVAELSGQGTEVVIVSSGAVAAGRQALGLPDRPRTLPQKQAAAAVGQSRLMRAYEEAFSSYDLKVAQILLTRDDLANRRRFQNARGTLDTLLACGIIPVINENDTVVVDELKFGDNDNLSALVTNLVEAQLLLIMTDIDGLYTADPRTDPNATLIHQVGAVTRELERGAGGSGTSVGTGGMATKLAAAKKVVKSGVAAIIFAGRGERTLSRVMKGELLGTLFLPAGESLNRRKHWIAFTIKPAGSIVVDAGARDVLARHGRSLLPSGIAQVEGRFDRGACVRVLDPDGVEFARGITDYSSQEVEKIRGHQSSEIERILGFRYGDDVIHRDNLVLL.

Lysine 15 lines the ATP pocket. Serine 55, aspartate 142, and asparagine 154 together coordinate substrate. ATP contacts are provided by residues 174–175 (TD) and 216–222 (TGGMATK). In terms of domain architecture, PUA spans 281–359 (AGSIVVDAGA…SEIERILGFR (79 aa)).

The protein belongs to the glutamate 5-kinase family.

It is found in the cytoplasm. It carries out the reaction L-glutamate + ATP = L-glutamyl 5-phosphate + ADP. Its pathway is amino-acid biosynthesis; L-proline biosynthesis; L-glutamate 5-semialdehyde from L-glutamate: step 1/2. Catalyzes the transfer of a phosphate group to glutamate to form L-glutamate 5-phosphate. The chain is Glutamate 5-kinase from Geobacter sp. (strain M21).